Reading from the N-terminus, the 206-residue chain is N-(5'-phosphoribosyl)anthranilate isomerase (206 aa).

Belongs to the TrpF family.

The enzyme catalyses N-(5-phospho-beta-D-ribosyl)anthranilate = 1-(2-carboxyphenylamino)-1-deoxy-D-ribulose 5-phosphate. It functions in the pathway amino-acid biosynthesis; L-tryptophan biosynthesis; L-tryptophan from chorismate: step 3/5. The chain is N-(5'-phosphoribosyl)anthranilate isomerase from Pseudomonas putida (strain ATCC 700007 / DSM 6899 / JCM 31910 / BCRC 17059 / LMG 24140 / F1).